The sequence spans 318 residues: Probable aminopeptidase YbaC (318 aa).

The Nucleophile role is filled by S115. D266 is an active-site residue. The active-site Proton donor is the H296.

It belongs to the peptidase S33 family.

Functionally, probable aminopeptidase. In Bacillus subtilis (strain 168), this protein is Probable aminopeptidase YbaC (ybaC).